Reading from the N-terminus, the 154-residue chain is MSARCGSTARTLFELCDQCNITLPTLQINCIFCNSILQTAEVLAFAFRELYVVWRNDFPFAACVKCLEFYGKVNQYRNFRYAAYAPTVEEETGLTILEVRIRCCKCHKPLSPVEKTNHIVKKTQFFKLQDSWTGYCLHCWKKCMEKGQRSETSC.

2 zinc fingers span residues 30 to 66 (CIFCNSILQTAEVLAFAFRELYVVWRNDFPFAACVKC) and 103 to 139 (CCKCHKPLSPVEKTNHIVKKTQFFKLQDSWTGYCLHC).

The protein belongs to the papillomaviridae E6 protein family. In terms of assembly, forms homodimers. Interacts with ubiquitin-protein ligase UBE3A/E6-AP; this interaction stimulates UBE3A ubiquitin activity. Interacts with host TP53 and EP300; this interaction inhibits TP53 activity.

Its subcellular location is the host cytoplasm. It localises to the host nucleus. Its function is as follows. Plays a major role in the induction and maintenance of cellular transformation. E6 associates with host UBE3A/E6-AP ubiquitin-protein ligase and modulates its activity. Sequesters tumor suppressor TP53 in the host cytoplasm and modulates its activity by interacting with host EP300 that results in the reduction of TP53 acetylation and activation. In turn, apoptosis induced by DNA damage is inhibited. E6 also protects host keratinocytes from apoptosis by mediating the degradation of host BAK1. May also inhibit host immune response. In Human papillomavirus 7, this protein is Protein E6.